The chain runs to 505 residues: Glycerol kinase (505 aa).

T15 is an ADP binding site. Residues T15, T16, and S17 each coordinate ATP. Sn-glycerol 3-phosphate is bound at residue T15. R19 contacts ADP. Sn-glycerol 3-phosphate-binding residues include R85, E86, Y136, and D249. R85, E86, Y136, D249, and Q250 together coordinate glycerol. 2 residues coordinate ADP: T271 and G314. T271, G314, Q318, and G415 together coordinate ATP. Residues G415 and N419 each coordinate ADP.

It belongs to the FGGY kinase family.

The enzyme catalyses glycerol + ATP = sn-glycerol 3-phosphate + ADP + H(+). It participates in polyol metabolism; glycerol degradation via glycerol kinase pathway; sn-glycerol 3-phosphate from glycerol: step 1/1. Inhibited by fructose 1,6-bisphosphate (FBP). Functionally, key enzyme in the regulation of glycerol uptake and metabolism. Catalyzes the phosphorylation of glycerol to yield sn-glycerol 3-phosphate. The polypeptide is Glycerol kinase (Mycoplasma capricolum subsp. capricolum (strain California kid / ATCC 27343 / NCTC 10154)).